We begin with the raw amino-acid sequence, 255 residues long: 5'-nucleotidase SurE (255 aa).

The a divalent metal cation site is built by Asp-8, Asp-9, Ser-40, and Asn-93.

Belongs to the SurE nucleotidase family. The cofactor is a divalent metal cation.

Its subcellular location is the cytoplasm. The enzyme catalyses a ribonucleoside 5'-phosphate + H2O = a ribonucleoside + phosphate. Its function is as follows. Nucleotidase that shows phosphatase activity on nucleoside 5'-monophosphates. This Bradyrhizobium diazoefficiens (strain JCM 10833 / BCRC 13528 / IAM 13628 / NBRC 14792 / USDA 110) protein is 5'-nucleotidase SurE.